The sequence spans 480 residues: Bindin (480 aa).

An N-terminal signal peptide occupies residues 1–20 (MDSQVLPLILLIIVFAASSA). Residues 21 to 247 (HGHFPHRTNQ…GEMRAERQRR (227 aa)) constitute a propeptide that is removed on maturation. The segment at 161 to 211 (AEMRHRRSAKDDDVNKRASPRKGSSPAGKKVQIMEQDAGKGDAHNEKEVVK) is disordered. Basic and acidic residues predominate over residues 197–211 (DAGKGDAHNEKEVVK). The segment at 377 to 385 (LRHLRHHSN) is fucose-binding domain. A helical transmembrane segment spans residues 431–451 (GAGAVAGAAMAAGMPPYPGGA). A disordered region spans residues 452–480 (QGGMRVGGQPQNPMGGNAYNPMTGYRQQG).

It belongs to the bindin family.

Its subcellular location is the cytoplasmic vesicle. The protein localises to the secretory vesicle. The protein resides in the acrosome membrane. Functionally, species-specific sea urchin sperm protein required for adhesion of sperm to the egg surface during fertilization. Bindin coats the acrosomal process after it is externalized by the acrosome reaction. It binds to sulfated, fucose-containing polysaccharides on the vitelline layer receptor proteoglycans which cover the egg plasma membrane. This Arbacia punctulata (Punctuate sea urchin) protein is Bindin.